A 92-amino-acid chain; its full sequence is Protein LSO2 (92 aa).

Composition is skewed to basic and acidic residues over residues 1 to 10 (MGKRFSESAA) and 38 to 72 (EASK…ERDA). The segment at 1–92 (MGKRFSESAA…KGGKGKRKMK (92 aa)) is disordered. Positions 17–80 (ARKRDQAHAK…DALLTAEEEQ (64 aa)) form a coiled coil.

It belongs to the CCDC124 family. In terms of assembly, associates with translationally inactive ribosomes in the nonrotated state. LSO2 bridges the decoding sites of the small with the GTPase activating center (GAC) of the large subunit. This position allows accommodation of the DOM34-dependent ribosome recycling system, which splits LSO2-containing ribosomes.

It localises to the nucleus. It is found in the cytoplasm. Functionally, ribosome-binding protein involved in ribosome hibernation by associating with translationally inactive ribosomes. Required for translational recovery after starvation from stationary phase. May facilitate rapid translation reactivation by stabilizing the recycling-competent state of inactive ribosomes. The polypeptide is Protein LSO2 (Saccharomyces cerevisiae (strain ATCC 204508 / S288c) (Baker's yeast)).